The sequence spans 355 residues: 5-formaminoimidazole-4-carboxamide-1-(beta)-D-ribofuranosyl 5'-monophosphate synthetase (355 aa).

2 residues coordinate 5-amino-1-(5-phospho-beta-D-ribosyl)imidazole-4-carboxamide: H27 and S94. One can recognise an ATP-grasp domain in the interval 101 to 332 (TESFAELAVP…YSDMIEENLS (232 aa)). Residues 144–195 (PEKI…TRYY) and E225 each bind ATP. N254 contacts 5-amino-1-(5-phospho-beta-D-ribosyl)imidazole-4-carboxamide. Positions 292 and 305 each coordinate Mg(2+).

This sequence belongs to the phosphohexose mutase family. Requires Mg(2+) as cofactor. Mn(2+) is required as a cofactor.

The enzyme catalyses 5-amino-1-(5-phospho-beta-D-ribosyl)imidazole-4-carboxamide + formate + ATP = 5-formamido-1-(5-phospho-D-ribosyl)imidazole-4-carboxamide + ADP + phosphate. It participates in purine metabolism; IMP biosynthesis via de novo pathway; 5-formamido-1-(5-phospho-D-ribosyl)imidazole-4-carboxamide from 5-amino-1-(5-phospho-D-ribosyl)imidazole-4-carboxamide (formate route): step 1/1. Functionally, catalyzes the ATP- and formate-dependent formylation of 5-aminoimidazole-4-carboxamide-1-beta-d-ribofuranosyl 5'-monophosphate (AICAR) to 5-formaminoimidazole-4-carboxamide-1-beta-d-ribofuranosyl 5'-monophosphate (FAICAR) in the absence of folates. The protein is 5-formaminoimidazole-4-carboxamide-1-(beta)-D-ribofuranosyl 5'-monophosphate synthetase of Methanococcoides burtonii (strain DSM 6242 / NBRC 107633 / OCM 468 / ACE-M).